Here is an 850-residue protein sequence, read N- to C-terminus: Translation initiation factor IF-2 (850 aa).

Disordered stretches follow at residues 50–72 (LKSS…KTTS) and 92–267 (FVQR…TGPV). Positions 96–135 (SPEEIQAEQKREQEERRAAENAAREKADADARQRNEEQAR) are enriched in basic and acidic residues. Positions 136 to 172 (RQAAQAPAAAPVAKAEPAPAAAAPAAPAVPDAPVSED) are enriched in low complexity. Basic and acidic residues-rich tracts occupy residues 173-210 (AAAR…RGEA) and 234-243 (TTDEESDGFR). Over residues 244-257 (RGRGGKGKPKKRNQ) the composition is skewed to basic residues. A tr-type G domain is found at 350–517 (SRAPVVTVMG…AVLLQAEILE (168 aa)). The interval 359–366 (GHVDHGKT) is G1. Residue 359–366 (GHVDHGKT) participates in GTP binding. Residues 384–388 (GITQH) are G2. A G3 region spans residues 405 to 408 (DTPG). GTP-binding positions include 405–409 (DTPGH) and 459–462 (NKID). The segment at 459–462 (NKID) is G4. Residues 495 to 497 (SAK) are G5.

Belongs to the TRAFAC class translation factor GTPase superfamily. Classic translation factor GTPase family. IF-2 subfamily.

It localises to the cytoplasm. Functionally, one of the essential components for the initiation of protein synthesis. Protects formylmethionyl-tRNA from spontaneous hydrolysis and promotes its binding to the 30S ribosomal subunits. Also involved in the hydrolysis of GTP during the formation of the 70S ribosomal complex. In Pseudomonas entomophila (strain L48), this protein is Translation initiation factor IF-2.